The primary structure comprises 196 residues: Imidazoleglycerol-phosphate dehydratase (196 aa).

This sequence belongs to the imidazoleglycerol-phosphate dehydratase family.

It localises to the cytoplasm. The catalysed reaction is D-erythro-1-(imidazol-4-yl)glycerol 3-phosphate = 3-(imidazol-4-yl)-2-oxopropyl phosphate + H2O. It functions in the pathway amino-acid biosynthesis; L-histidine biosynthesis; L-histidine from 5-phospho-alpha-D-ribose 1-diphosphate: step 6/9. This Chlorobium chlorochromatii (strain CaD3) protein is Imidazoleglycerol-phosphate dehydratase.